Reading from the N-terminus, the 133-residue chain is Large ribosomal subunit protein uL11 (133 aa).

This sequence belongs to the universal ribosomal protein uL11 family. In terms of assembly, part of the ribosomal stalk of the 50S ribosomal subunit. Interacts with L10 and the large rRNA to form the base of the stalk. L10 forms an elongated spine to which 2 L12 dimers bind in a sequential fashion forming a pentameric L10(L12)2(L12)2 complex. One or more lysine residues are methylated.

In terms of biological role, forms part of the ribosomal stalk which helps the ribosome interact with GTP-bound translation factors. This chain is Large ribosomal subunit protein uL11, found in Geobacillus stearothermophilus (Bacillus stearothermophilus).